A 162-amino-acid polypeptide reads, in one-letter code: Protein-export protein SecB (162 aa).

It belongs to the SecB family. In terms of assembly, homotetramer, a dimer of dimers. One homotetramer interacts with 1 SecA dimer.

It localises to the cytoplasm. One of the proteins required for the normal export of preproteins out of the cell cytoplasm. It is a molecular chaperone that binds to a subset of precursor proteins, maintaining them in a translocation-competent state. It also specifically binds to its receptor SecA. In Pseudoalteromonas translucida (strain TAC 125), this protein is Protein-export protein SecB.